We begin with the raw amino-acid sequence, 329 residues long: RING finger protein 225 (329 aa).

The segment at 1 to 55 is disordered; it reads MPCPRPFWLRHSRAPQGSGPSSPGSLSAPRSPSRGEDQEEEEEEEGDGSPGSGPI. The span at 14-32 shows a compositional bias: low complexity; sequence APQGSGPSSPGSLSAPRSP. Over residues 37 to 47 the composition is skewed to acidic residues; the sequence is DQEEEEEEEGD. An RING-type zinc finger spans residues 64 to 112; that stretch reads CLICVSSFDGVFKLPKRLDCGHVFCLECLARLSLATAGGGNAVACPVCR. The interval 122–181 is disordered; that stretch reads GLPALPTQSGLLPRDARAPPSRQGSVRFDRRRGLLYLRPPPPPPGPRKARAPPPPPPLRL. Pro residues predominate over residues 159 to 179; that stretch reads RPPPPPPGPRKARAPPPPPPL. A helical membrane pass occupies residues 203–223; it reads ALAVLVAAGLVVSGVYIFFLI. Positions 248 to 329 are disordered; the sequence is FPPRPPPGSP…RGARRLWGSQ (82 aa). A compositionally biased stretch (acidic residues) spans 281–293; the sequence is DALEPEAGPEDPA. The span at 294-304 shows a compositional bias: basic and acidic residues; that stretch reads EAERTLDRRSD.

It localises to the membrane. This chain is RING finger protein 225, found in Homo sapiens (Human).